A 392-amino-acid polypeptide reads, in one-letter code: Potassium/proton antiporter CemA (392 aa).

4 consecutive transmembrane segments (helical) span residues 174 to 194 (FLASLIWIPWIVSWFLRVWWL), 269 to 289 (SLANLGSDILACLILLAMLSL), 316 to 336 (FLILVTDVFVGFHSTHGWEVI), and 352 to 372 (FIFMFVATFPVLLDTVFKYWI).

This sequence belongs to the CemA family.

It is found in the plastid. The protein resides in the chloroplast inner membrane. The enzyme catalyses K(+)(in) + H(+)(out) = K(+)(out) + H(+)(in). Functionally, contributes to K(+)/H(+) antiport activity by supporting proton efflux to control proton extrusion and homeostasis in chloroplasts in a light-dependent manner to modulate photosynthesis. Prevents excessive induction of non-photochemical quenching (NPQ) under continuous-light conditions. Indirectly promotes efficient inorganic carbon uptake into chloroplasts. The sequence is that of Potassium/proton antiporter CemA from Nephroselmis olivacea (Green alga).